We begin with the raw amino-acid sequence, 78 residues long: Small ribosomal subunit protein uS17 (78 aa).

This sequence belongs to the universal ribosomal protein uS17 family. As to quaternary structure, part of the 30S ribosomal subunit.

Its function is as follows. One of the primary rRNA binding proteins, it binds specifically to the 5'-end of 16S ribosomal RNA. This is Small ribosomal subunit protein uS17 from Rhizobium meliloti (strain 1021) (Ensifer meliloti).